Consider the following 133-residue polypeptide: Small ribosomal subunit protein uS19 (133 aa).

It belongs to the universal ribosomal protein uS19 family. Part of the 30S ribosomal subunit.

Its function is as follows. Protein S19 forms a complex with S13 that binds strongly to the 16S ribosomal RNA. The protein is Small ribosomal subunit protein uS19 of Thermococcus kodakarensis (strain ATCC BAA-918 / JCM 12380 / KOD1) (Pyrococcus kodakaraensis (strain KOD1)).